The sequence spans 191 residues: Putative glutathione-dependent formaldehyde-activating enzyme (191 aa).

Positions Phe-20–Asp-166 constitute a CENP-V/GFA domain. 7 residues coordinate Zn(2+): Cys-27, Cys-29, Cys-48, Cys-50, Cys-53, Cys-95, and Cys-98.

Belongs to the Gfa family. Zn(2+) is required as a cofactor.

The catalysed reaction is S-(hydroxymethyl)glutathione = glutathione + formaldehyde. Its pathway is one-carbon metabolism; formaldehyde degradation; formate from formaldehyde (glutathione route): step 1/3. In terms of biological role, catalyzes the condensation of formaldehyde and glutathione to S-hydroxymethylglutathione. This chain is Putative glutathione-dependent formaldehyde-activating enzyme, found in Penicillium rubens (strain ATCC 28089 / DSM 1075 / NRRL 1951 / Wisconsin 54-1255) (Penicillium chrysogenum).